We begin with the raw amino-acid sequence, 156 residues long: Flagellar assembly factor FliW (156 aa).

This sequence belongs to the FliW family. As to quaternary structure, interacts with translational regulator CsrA and flagellin(s).

Its subcellular location is the cytoplasm. Functionally, acts as an anti-CsrA protein, binds CsrA and prevents it from repressing translation of its target genes, one of which is flagellin. Binds to flagellin and participates in the assembly of the flagellum. This chain is Flagellar assembly factor FliW, found in Syntrophomonas wolfei subsp. wolfei (strain DSM 2245B / Goettingen).